We begin with the raw amino-acid sequence, 428 residues long: Adenylosuccinate synthetase (428 aa).

Residues 12 to 18 (GDEGKGK) and 40 to 42 (GHT) contribute to the GTP site. The active-site Proton acceptor is aspartate 13. Aspartate 13 and glycine 40 together coordinate Mg(2+). Residues 13–16 (DEGK), 38–41 (NAGH), threonine 128, arginine 142, glutamine 223, threonine 238, and arginine 302 each bind IMP. Residue histidine 41 is the Proton donor of the active site. 298 to 304 (TTTGRPR) contributes to the substrate binding site. Residues arginine 304, 330–332 (KLD), and 412–414 (GVG) contribute to the GTP site.

Belongs to the adenylosuccinate synthetase family. Homodimer. The cofactor is Mg(2+).

The protein resides in the cytoplasm. It catalyses the reaction IMP + L-aspartate + GTP = N(6)-(1,2-dicarboxyethyl)-AMP + GDP + phosphate + 2 H(+). The protein operates within purine metabolism; AMP biosynthesis via de novo pathway; AMP from IMP: step 1/2. Functionally, plays an important role in the de novo pathway of purine nucleotide biosynthesis. Catalyzes the first committed step in the biosynthesis of AMP from IMP. This Kineococcus radiotolerans (strain ATCC BAA-149 / DSM 14245 / SRS30216) protein is Adenylosuccinate synthetase.